We begin with the raw amino-acid sequence, 425 residues long: D-arabinitol transporter (425 aa).

The Cytoplasmic segment spans residues Met-1–Gln-7. A helical membrane pass occupies residues Trp-8 to Gly-28. Topologically, residues Asp-29 to Ser-51 are extracellular. The chain crosses the membrane as a helical span at residues Phe-52–Ala-72. Residues Glu-73–Thr-80 are Cytoplasmic-facing. A helical transmembrane segment spans residues Met-81 to Gly-101. Topologically, residues His-102 to Leu-107 are extracellular. A helical transmembrane segment spans residues Ile-108–Val-128. At Ala-129–Ser-141 the chain is on the cytoplasmic side. Residues Ala-142 to Pro-162 form a helical membrane-spanning segment. Residues Ser-163–Met-172 are Extracellular-facing. Residues Gly-173–Leu-193 form a helical membrane-spanning segment. At Arg-194–Asn-237 the chain is on the cytoplasmic side. The helical transmembrane segment at Thr-238–Phe-258 threads the bilayer. Residues Ser-259 to Trp-263 lie on the Extracellular side of the membrane. The helical transmembrane segment at Leu-264 to Leu-284 threads the bilayer. Residues Gly-285 to Arg-295 lie on the Cytoplasmic side of the membrane. The helical transmembrane segment at Trp-296 to Phe-316 threads the bilayer. At Gly-317 to Ala-323 the chain is on the extracellular side. A helical membrane pass occupies residues Leu-324–Phe-344. Topologically, residues Pro-345–Asn-360 are cytoplasmic. Residues Leu-361–Phe-381 traverse the membrane as a helical segment. The Extracellular portion of the chain corresponds to Ser-382–Thr-383. A helical membrane pass occupies residues Ile-384–Ile-404. Over Arg-405–Ser-425 the chain is Cytoplasmic.

It belongs to the major facilitator superfamily. Sugar transporter (TC 2.A.1.1) family. CsbX subfamily.

It is found in the cell membrane. The chain is D-arabinitol transporter (dalT) from Klebsiella pneumoniae.